The following is a 288-amino-acid chain: Undecaprenyl-diphosphatase (288 aa).

Transmembrane regions (helical) follow at residues 25–45, 53–73, 93–113, 121–141, 171–191, 196–216, 231–251, and 263–283; these read GITE…NEFL, FIDM…MVIY, WKLW…GLLL, LSNF…FIWI, VLSI…GIIV, SVAA…YSGL, GQAA…LFVI, and FTVF…YGAV.

This sequence belongs to the UppP family.

It is found in the cell membrane. The enzyme catalyses di-trans,octa-cis-undecaprenyl diphosphate + H2O = di-trans,octa-cis-undecaprenyl phosphate + phosphate + H(+). In terms of biological role, catalyzes the dephosphorylation of undecaprenyl diphosphate (UPP). Confers resistance to bacitracin. The chain is Undecaprenyl-diphosphatase from Streptococcus thermophilus (strain CNRZ 1066).